The chain runs to 202 residues: Phosphoenolpyruvate guanylyltransferase (202 aa).

Phosphoenolpyruvate-binding residues include Thr-140, Gly-156, and Ser-159.

This sequence belongs to the CofC family.

It catalyses the reaction phosphoenolpyruvate + GTP + H(+) = enolpyruvoyl-2-diphospho-5'-guanosine + diphosphate. It participates in cofactor biosynthesis; coenzyme F420 biosynthesis. Guanylyltransferase that catalyzes the activation of phosphoenolpyruvate (PEP) as enolpyruvoyl-2-diphospho-5'-guanosine, via the condensation of PEP with GTP. It is involved in the biosynthesis of coenzyme F420, a hydride carrier cofactor. The protein is Phosphoenolpyruvate guanylyltransferase of Chloroflexus aggregans (strain MD-66 / DSM 9485).